Consider the following 933-residue polypeptide: Protein translocase subunit SecA (933 aa).

ATP is bound by residues Gln-87, Gly-105–Thr-109, and Asp-515. Disordered regions lie at residues Glu-567–Ser-588, Asp-840–Ala-861, and Ala-880–Leu-933. A compositionally biased stretch (basic and acidic residues) spans Glu-845–Gln-856. A compositionally biased stretch (low complexity) spans Ala-880–Ala-897. The segment covering Val-905–Arg-914 has biased composition (basic and acidic residues). Zn(2+) contacts are provided by Cys-918, Cys-920, Cys-929, and Cys-930. Basic residues predominate over residues Lys-924–Leu-933.

This sequence belongs to the SecA family. As to quaternary structure, monomer and homodimer. Part of the essential Sec protein translocation apparatus which comprises SecA, SecYEG and auxiliary proteins SecDF-YajC and YidC. The cofactor is Zn(2+).

It localises to the cell inner membrane. It is found in the cytoplasm. It catalyses the reaction ATP + H2O + cellular proteinSide 1 = ADP + phosphate + cellular proteinSide 2.. Its function is as follows. Part of the Sec protein translocase complex. Interacts with the SecYEG preprotein conducting channel. Has a central role in coupling the hydrolysis of ATP to the transfer of proteins into and across the cell membrane, serving both as a receptor for the preprotein-SecB complex and as an ATP-driven molecular motor driving the stepwise translocation of polypeptide chains across the membrane. In Halorhodospira halophila (strain DSM 244 / SL1) (Ectothiorhodospira halophila (strain DSM 244 / SL1)), this protein is Protein translocase subunit SecA.